A 549-amino-acid chain; its full sequence is Cytoplasmic trehalase (549 aa).

Residues Arg168, 175-176 (WD), Asn212, 221-223 (RSQ), 292-294 (RDE), and Gly324 each bind substrate. Catalysis depends on proton donor/acceptor residues Asp326 and Glu509. Glu525 provides a ligand contact to substrate.

Belongs to the glycosyl hydrolase 37 family. Monomer.

The protein localises to the cytoplasm. It carries out the reaction alpha,alpha-trehalose + H2O = alpha-D-glucose + beta-D-glucose. The protein operates within glycan degradation; trehalose degradation; D-glucose from alpha,alpha-trehalose: step 1/1. Functionally, hydrolyzes trehalose to glucose. Could be involved, in cells returning to low osmolarity conditions, in the utilization of the accumulated cytoplasmic trehalose, which was synthesized in response to high osmolarity. In Escherichia coli O127:H6 (strain E2348/69 / EPEC), this protein is Cytoplasmic trehalase.